Reading from the N-terminus, the 179-residue chain is DELTA-actitoxin-Afr1e (179 aa).

The interval 1–29 (SADVAGAVIDGAGLGFDVLKTVLEALGNV) is N-terminal alpha-helix that contributes to the pore. The tract at residues 11–30 (GAGLGFDVLKTVLEALGNVK) is N-terminal region. Residue Arg-31 coordinates an N-(acyl)-sphingosylphosphocholine. 2 residues coordinate N-acetyl-D-glucosamine 6-sulfate: Tyr-51 and Arg-53. An N-(acyl)-sphingosylphosphocholine contacts are provided by Arg-53, Ser-54, Arg-79, Gly-85, Tyr-108, Tyr-113, Ser-114, Trp-116, Tyr-133, Tyr-137, Tyr-138, Arg-144, and Gly-168. The tract at residues 105 to 120 (SVPYDYNWYSNWWNVR) is trp-rich region, which is important for the binding to lipid membrane. Tyr-138 provides a ligand contact to N-acetyl-D-glucosamine 6-sulfate. The Cell attachment site, crucial for protein stability signature appears at 144 to 146 (RGD).

This sequence belongs to the actinoporin family. Sea anemone subfamily. In terms of assembly, octamer or nonamer in membranes. Monomer in the soluble state.

It localises to the secreted. It is found in the nematocyst. Its subcellular location is the target cell membrane. Functionally, pore-forming toxin (PFT) that consists of a crown-shaped octamer or nonamer that forms cation-selective hydrophilic pores of about 1.5 nm (inside) and 13 nm (outside) and causes cytolysis. It causes cardiac stimulation. Also causes hemolysis (HC(50)=1.6 nM). Interestingly, the Phe-16 is crucial for hemolysis. Pore formation is a multi-step process that involves specific recognition of membrane sphingomyelin (but neither cholesterol nor phosphatidylcholine) using aromatic rich region and adjacent phosphocholine (POC) binding site, firm binding to the membrane (mainly driven by hydrophobic interactions) accompanied by the transfer of the N-terminal region to the lipid-water interface and finally pore formation after oligomerization of monomers. It is probable that a dimeric form is an assembly intermediate before the complete oligomerization. The formation of stable pores occurs only in vesicles composed of DOPC/SM (there is no oligomerization when the PFT is treated with vesicles of DOPC or SM alone). The transmembrane pore displays 8 lateral perforations, one at each subunit-subunit interface, partially occupied by the acyl-chain region of a bridging lipid. Each pore contains 24 lipid molecules, firmly bound to each subunit, that is, 3 lipids (L1, L2, L3, L4 and/or L5) are associated to each subunit. Lipid L1 bridges 2 subunits, whereas lipids L2 and L3 bind to sites at single subunit. This chain is DELTA-actitoxin-Afr1e, found in Actinia fragacea (Strawberry anemone).